Consider the following 294-residue polypeptide: Probable 2-(5''-triphosphoribosyl)-3'-dephosphocoenzyme-A synthase (294 aa).

This sequence belongs to the CitG/MdcB family.

The enzyme catalyses 3'-dephospho-CoA + ATP = 2'-(5''-triphospho-alpha-D-ribosyl)-3'-dephospho-CoA + adenine. The sequence is that of Probable 2-(5''-triphosphoribosyl)-3'-dephosphocoenzyme-A synthase from Streptococcus pyogenes serotype M2 (strain MGAS10270).